Reading from the N-terminus, the 373-residue chain is tRNA-specific 2-thiouridylase MnmA (373 aa).

Residues 7 to 14 (AMSGGVDS) and Leu33 contribute to the ATP site. Catalysis depends on Cys101, which acts as the Nucleophile. Cys101 and Cys215 are oxidised to a cystine. Gly125 lines the ATP pocket. Positions 165–167 (KDQ) are interaction with tRNA. Cys215 acts as the Cysteine persulfide intermediate in catalysis.

Belongs to the MnmA/TRMU family.

The protein localises to the cytoplasm. It catalyses the reaction S-sulfanyl-L-cysteinyl-[protein] + uridine(34) in tRNA + AH2 + ATP = 2-thiouridine(34) in tRNA + L-cysteinyl-[protein] + A + AMP + diphosphate + H(+). Functionally, catalyzes the 2-thiolation of uridine at the wobble position (U34) of tRNA, leading to the formation of s(2)U34. This chain is tRNA-specific 2-thiouridylase MnmA, found in Roseiflexus sp. (strain RS-1).